An 839-amino-acid polypeptide reads, in one-letter code: V-type proton ATPase 116 kDa subunit a 1 (839 aa).

At 1 to 395 (MGELFRSEEM…DAYGIGTYRE (395 aa)) the chain is on the cytoplasmic side. Residues Thr-257 and Thr-367 each carry the phosphothreonine modification. Residue Tyr-371 is modified to Phosphotyrosine. Residues 396 to 414 (INPAPYTVITFPFLFAVMF) form a helical membrane-spanning segment. Over 415–416 (GD) the chain is Vacuolar. A helical membrane pass occupies residues 417–433 (FGHGILMTLFAVWMVLR). The Cytoplasmic segment spans residues 434-448 (ESRILSQKHENEMFS). Residues 449-478 (MVFSGRYIILLMGLFSIYTGLIYNDCFSKS) traverse the membrane as a helical segment. Residues 479–542 (LNIFGSSWSV…ATNKLTFLNS (64 aa)) lie on the Vacuolar side of the membrane. Residues 543 to 562 (FKMKMSVILGIIHMLFGVSL) traverse the membrane as a helical segment. Residues 563–580 (SLFNHIYFKKPLNIYFGF) are Cytoplasmic-facing. A helical transmembrane segment spans residues 581–601 (IPEIIFMSSLFGYLVILIFYK). Topologically, residues 602–646 (WTAYDAHSSRNAPSLLIHFINMFLFSYPESGNAMLYSGQKGIQCF) are vacuolar. A helical membrane pass occupies residues 647-666 (LIVVAMLCVPWMLLFKPLIL). Residues 667–726 (RHQYLRKKHLGTLNFGGIRVGNGPTEEDAEIIQHDQLSTHSEDAEEFDFGDTMVHQAIHT) are Cytoplasmic-facing. A helical membrane pass occupies residues 727–751 (IEYCLGCISNTASYLRLWALSLAHA). Topologically, residues 752–772 (QLSEVLWTMVIHIGLHVRSLA) are vacuolar. A helical transmembrane segment spans residues 773–811 (GGLGLFFIFAAFATLTVAILLIMEGLSAFLHALRLHWVE). The Cytoplasmic segment spans residues 812-839 (FQNKFYTGTGFKFLPFSFEHIREGKFDE).

This sequence belongs to the V-ATPase 116 kDa subunit family. As to quaternary structure, V-ATPase is a heteromultimeric enzyme made up of two complexes: the ATP-hydrolytic V1 complex and the proton translocation V0 complex. The V1 complex consists of three catalytic AB heterodimers that form a heterohexamer, three peripheral stalks each consisting of EG heterodimers, one central rotor including subunits D and F, and the regulatory subunits C and H. The proton translocation complex V0 consists of the proton transport subunit a, a ring of proteolipid subunits c9c'', rotary subunit d, subunits e and f, and the accessory subunits ATP6AP1/Ac45 and ATP6AP2/PRR. Interacts with SPAAR. Predominantly expressed in neurons in the cortex and in the dentate gyrus, CA1 and CA3 regions of the hippocampus (at protein level). Expressed at lower levels in astrocytes, oligodendrocytes and microglia (at protein level). In the cerebellum, present in Purkinje and granule cells (at protein level).

The protein resides in the cytoplasmic vesicle. Its subcellular location is the clathrin-coated vesicle membrane. The protein localises to the secretory vesicle. It localises to the synaptic vesicle membrane. It is found in the melanosome. Functionally, subunit of the V0 complex of vacuolar(H+)-ATPase (V-ATPase), a multisubunit enzyme composed of a peripheral complex (V1) that hydrolyzes ATP and a membrane integral complex (V0) that translocates protons. V-ATPase is responsible for the acidification of various organelles, such as lysosomes, endosomes, the trans-Golgi network, and secretory granules, including synaptic vesicles. In certain cell types, can be exported to the plasma membrane, where it is involved in the acidification of the extracellular environment. Required for assembly and activity of the vacuolar ATPase. Through its action on compartment acidification, plays an essential role in neuronal development in terms of integrity and connectivity of neurons. The protein is V-type proton ATPase 116 kDa subunit a 1 (Atp6v0a1) of Mus musculus (Mouse).